A 351-amino-acid chain; its full sequence is Glycerol-3-phosphate dehydrogenase [NAD(P)+] (351 aa).

S12, W13, H33, and K114 together coordinate NADPH. Sn-glycerol 3-phosphate is bound by residues K114, G145, and S147. NADPH is bound at residue A149. Positions 200, 253, 263, 264, and 265 each coordinate sn-glycerol 3-phosphate. K200 (proton acceptor) is an active-site residue. Residue R264 participates in NADPH binding. NADPH-binding residues include V288 and E290.

Belongs to the NAD-dependent glycerol-3-phosphate dehydrogenase family.

It localises to the cytoplasm. It carries out the reaction sn-glycerol 3-phosphate + NAD(+) = dihydroxyacetone phosphate + NADH + H(+). It catalyses the reaction sn-glycerol 3-phosphate + NADP(+) = dihydroxyacetone phosphate + NADPH + H(+). The protein operates within membrane lipid metabolism; glycerophospholipid metabolism. In terms of biological role, catalyzes the reduction of the glycolytic intermediate dihydroxyacetone phosphate (DHAP) to sn-glycerol 3-phosphate (G3P), the key precursor for phospholipid synthesis. The sequence is that of Glycerol-3-phosphate dehydrogenase [NAD(P)+] from Lacticaseibacillus paracasei (strain ATCC 334 / BCRC 17002 / CCUG 31169 / CIP 107868 / KCTC 3260 / NRRL B-441) (Lactobacillus paracasei).